We begin with the raw amino-acid sequence, 110 residues long: uncharacterized protein (110 aa).

The tract at residues 86 to 110 (SEEIDEPVMKKRHRRKGSPHRAPFF) is disordered. Residues 95–104 (KKRHRRKGSP) are compositionally biased toward basic residues.

This is an uncharacterized protein from Arabidopsis thaliana (Mouse-ear cress).